Here is a 307-residue protein sequence, read N- to C-terminus: Small ribosomal subunit protein uS3 (307 aa).

Residues Met-17–Lys-86 form the KH type-2 domain. Over residues Ile-201–Lys-226 the composition is skewed to basic and acidic residues. The disordered stretch occupies residues Ile-201–Glu-265. The segment covering Pro-240–Glu-265 has biased composition (acidic residues).

This sequence belongs to the universal ribosomal protein uS3 family. As to quaternary structure, part of the 30S ribosomal subunit.

Binds the lower part of the 30S subunit head. In Methanosarcina mazei (strain ATCC BAA-159 / DSM 3647 / Goe1 / Go1 / JCM 11833 / OCM 88) (Methanosarcina frisia), this protein is Small ribosomal subunit protein uS3.